Reading from the N-terminus, the 221-residue chain is Imidazole glycerol phosphate synthase subunit HisH (221 aa).

A Glutamine amidotransferase type-1 domain is found at 9-221 (DVVIIDTGCA…QILGNFLKMQ (213 aa)). Cysteine 84 functions as the Nucleophile in the catalytic mechanism. Active-site residues include histidine 202 and glutamate 204.

In terms of assembly, heterodimer of HisH and HisF.

The protein resides in the cytoplasm. It carries out the reaction 5-[(5-phospho-1-deoxy-D-ribulos-1-ylimino)methylamino]-1-(5-phospho-beta-D-ribosyl)imidazole-4-carboxamide + L-glutamine = D-erythro-1-(imidazol-4-yl)glycerol 3-phosphate + 5-amino-1-(5-phospho-beta-D-ribosyl)imidazole-4-carboxamide + L-glutamate + H(+). The catalysed reaction is L-glutamine + H2O = L-glutamate + NH4(+). Its pathway is amino-acid biosynthesis; L-histidine biosynthesis; L-histidine from 5-phospho-alpha-D-ribose 1-diphosphate: step 5/9. In terms of biological role, IGPS catalyzes the conversion of PRFAR and glutamine to IGP, AICAR and glutamate. The HisH subunit catalyzes the hydrolysis of glutamine to glutamate and ammonia as part of the synthesis of IGP and AICAR. The resulting ammonia molecule is channeled to the active site of HisF. The polypeptide is Imidazole glycerol phosphate synthase subunit HisH (Shewanella oneidensis (strain ATCC 700550 / JCM 31522 / CIP 106686 / LMG 19005 / NCIMB 14063 / MR-1)).